Consider the following 90-residue polypeptide: Small ribosomal subunit protein uS15c (90 aa).

It belongs to the universal ribosomal protein uS15 family. As to quaternary structure, part of the 30S ribosomal subunit.

Its subcellular location is the plastid. The protein resides in the chloroplast. This chain is Small ribosomal subunit protein uS15c (rps15-A), found in Hordeum vulgare (Barley).